The chain runs to 234 residues: Multicopy suppressor of SEC21 protein 28 (234 aa).

The Cytoplasmic portion of the chain corresponds to 1–47; it reads MQTPPESTDVKLDTLNEPSAHLIEKNVALPKDIFRSYLSYWIYEIAR. Thr-3 carries the phosphothreonine modification. The chain crosses the membrane as a helical span at residues 48–68; that stretch reads YTPVMILSLVIGVLVLLIIFF. The Extracellular portion of the chain corresponds to 69-72; that stretch reads NDNE. The chain crosses the membrane as a helical span at residues 73-93; sequence ACVFNSAIFAFTSLVGLLIIL. Topologically, residues 94-234 are cytoplasmic; the sequence is SDGNPKLVSR…NIDALLKKTE (141 aa). Residues 231–234 are COPI binding; sequence KKTE.

The protein belongs to the DUP/COS family. As to quaternary structure, interacts with MST27. Binds to coatomer proteins of COPI and SEC23/SEC24 of COPII coated vesicles.

It is found in the endoplasmic reticulum. The protein localises to the golgi apparatus. Its subcellular location is the cytoplasmic vesicle. The protein resides in the COPI-coated vesicle membrane. It localises to the COPII-coated vesicle membrane. Its function is as follows. Involved in protein trafficking vesicle formation, probably by stabilizing of coatomer at the Golgi membrane and thus allowing the efficient formation of COPI coated vesicles. The protein is Multicopy suppressor of SEC21 protein 28 (MST28) of Saccharomyces cerevisiae (strain ATCC 204508 / S288c) (Baker's yeast).